The sequence spans 502 residues: Probable cobyric acid synthase (502 aa).

One can recognise a GATase cobBQ-type domain in the interval 250-448 (KITIGTLRLP…FHGIFHNFEF (199 aa)). The Nucleophile role is filled by Cys-330. His-440 is a catalytic residue.

This sequence belongs to the CobB/CobQ family. CobQ subfamily.

It participates in cofactor biosynthesis; adenosylcobalamin biosynthesis. Catalyzes amidations at positions B, D, E, and G on adenosylcobyrinic A,C-diamide. NH(2) groups are provided by glutamine, and one molecule of ATP is hydrogenolyzed for each amidation. This Methanosphaera stadtmanae (strain ATCC 43021 / DSM 3091 / JCM 11832 / MCB-3) protein is Probable cobyric acid synthase.